The primary structure comprises 513 residues: Na(+)/H(+) antiporter NhaB (513 aa).

The next 12 membrane-spanning stretches (helical) occupy residues 23–43 (LALIIFLIVNPLIFLISPFVA), 52–72 (IFTLAMALKCYPLLPGGLLAI), 97–117 (LLLMFMVAGIYFMKQLLLFIF), 120–140 (LLLSIRSKMLLSLSFCVAAAF), 144–164 (FLDALTVVAVVISVAVGFYGI), 202–222 (LMMHAGVGTALGGVMTMVGEP), 238–258 (FFLRMSPVTVPVLICGLLTCL), 303–323 (AIIGVWLVTALALHLAEVGLI), 348–368 (TESLPFTALLTVFFSVVAVII), 391–411 (LFYIFNGLLSSISDNVFVGTI), 447–467 (ATPNGQAAFLFLLTSALAPLI), and 475–495 (VWMALPYTLVLTLVGLLCVEF).

This sequence belongs to the NhaB Na(+)/H(+) (TC 2.A.34) antiporter family.

It is found in the cell inner membrane. It catalyses the reaction 2 Na(+)(in) + 3 H(+)(out) = 2 Na(+)(out) + 3 H(+)(in). Na(+)/H(+) antiporter that extrudes sodium in exchange for external protons. The protein is Na(+)/H(+) antiporter NhaB of Escherichia coli O6:K15:H31 (strain 536 / UPEC).